The sequence spans 232 residues: TIR domain-containing adapter molecule 2 (232 aa).

Positions M1–P10 are enriched in basic and acidic residues. Residues M1 to E71 are disordered. The N-myristoyl glycine moiety is linked to residue G2. Residues K19–H29 show a composition bias toward polar residues. Basic and acidic residues predominate over residues H30 to L42. Residues P55 to E71 are compositionally biased toward acidic residues. Residues T70–V226 enclose the TIR domain. Residue Y164 is modified to Phosphotyrosine.

As to quaternary structure, homodimer. Interacts with TLR4, TICAM1, IRF3 and IRF7 in response to LPS. Interacts with IL1R1, IL1RAP, IRAK2, IRAK3 and TRAF6. Interacts with protein kinase-inactive mutants of IRAK1 and IRAK4. Isoform 1 interacts with isoform 2; the interaction occurs in late endosomes and disrupts the interaction between isoform 1 and TICAM1. Interacts with MYD88; the interaction decreases after IL-18 stimulation in a time-dependent manner. Interacts with IL18R1 and IL18RAP. Interacts with TLR2. Interacts with RAB11FIP2. In terms of processing, myristoylated. Required for membrane association which is critical for its ability to initiate efficient signaling. Phosphorylated by PRKCE in response to LPS. Phosphorylation is essential for its function. It is depleted from the membrane upon phosphorylation. Tyrosine phosphorylation is inhibited by phosphatase PTPN4.

It is found in the cytoplasm. Its subcellular location is the golgi apparatus. It localises to the cell membrane. The protein resides in the endoplasmic reticulum. The protein localises to the early endosome. It is found in the late endosome. Its subcellular location is the cell projection. It localises to the phagocytic cup. Its function is as follows. Functions as a sorting adapter in different signaling pathways to facilitate downstream signaling leading to type I interferon induction. In TLR4 signaling, physically bridges TLR4 and TICAM1 and functionally transmits signal to TICAM1 in early endosomes after endocytosis of TLR4. In TLR2 signaling, physically bridges TLR2 and MYD88 and is required for the TLR2-dependent movement of MYD88 to endosomes following ligand engagement. Involved in IL-18 signaling and is proposed to function as a sorting adapter for MYD88 in IL-18 signaling during adaptive immune response. Forms a complex with RAB11FIP2 that is recruited to the phagosomes to promote the activation of the actin-regulatory GTPases RAC1 and CDC42 and subsequent phagocytosis of Gram-negative bacteria. In Bos taurus (Bovine), this protein is TIR domain-containing adapter molecule 2 (TICAM2).